Here is a 175-residue protein sequence, read N- to C-terminus: Snake venom metalloproteinase BpMP-1 (175 aa).

In terms of domain architecture, Peptidase M12B spans 1 to 175 (YIELAVVADH…KHNPQCILNK (175 aa)). The Ca(2+) site is built by Glu-3 and Asp-74. 3 disulfides stabilise this stretch: Cys-98/Cys-171, Cys-131/Cys-155, and Cys-133/Cys-138. His-117 is a Zn(2+) binding site. Residue Glu-118 is part of the active site. The Zn(2+) site is built by His-121 and His-127. 2 residues coordinate Ca(2+): Cys-171 and Asn-174.

This sequence belongs to the venom metalloproteinase (M12B) family. P-I subfamily. In terms of assembly, monomer. Requires Zn(2+) as cofactor. In terms of tissue distribution, expressed by the venom gland.

The protein localises to the secreted. Its activity is regulated as follows. Inhibited by EDTA, 1,10-phenanthroline and beta-mercaptoethanol. Not inhibited by the serine protease inhibitors aprotinin and benzamidin. Its function is as follows. Non-hemorrhagic snake venom zinc metalloprotease that hydrolyzes the Aalpha-chain of fibrinogen, more slowly the Bbeta-chain and shows no effect on the gamma chain. Has no coagulant activity on bovine plasma and fibrinogen. In Bothrops pauloensis (Neuwied's lancehead), this protein is Snake venom metalloproteinase BpMP-1.